Reading from the N-terminus, the 206-residue chain is Small ribosomal subunit protein uS4 (206 aa).

The S4 RNA-binding domain occupies 96–156 (GRLDNVVYRM…EKAKNQLRVK (61 aa)).

This sequence belongs to the universal ribosomal protein uS4 family. In terms of assembly, part of the 30S ribosomal subunit. Contacts protein S5. The interaction surface between S4 and S5 is involved in control of translational fidelity.

Functionally, one of the primary rRNA binding proteins, it binds directly to 16S rRNA where it nucleates assembly of the body of the 30S subunit. Its function is as follows. With S5 and S12 plays an important role in translational accuracy. In Marinobacter nauticus (strain ATCC 700491 / DSM 11845 / VT8) (Marinobacter aquaeolei), this protein is Small ribosomal subunit protein uS4.